The primary structure comprises 163 residues: Sperm acrosome membrane-associated protein 3 (163 aa).

The first 35 residues, M1–A35, serve as a signal peptide directing secretion. One can recognise a C-type lysozyme domain in the interval R36 to L163. Disulfide bonds link C41/C161, C65/C149, C99/C114, and C110/C128.

It belongs to the glycosyl hydrolase 22 family. As to quaternary structure, interacts with ASTL.

The protein resides in the secreted. Functionally, sperm surface membrane protein that may be involved in sperm-egg plasma membrane adhesion and fusion during fertilization. It could be a potential receptor for the egg oligosaccharide residue N-acetylglucosamine, which is present in the extracellular matrix over the egg plasma membrane. The processed form has no detectable bacteriolytic activity in vitro. This is Sperm acrosome membrane-associated protein 3 (SPACA3) from Bos taurus (Bovine).